The sequence spans 266 residues: Thymidylate synthase (266 aa).

Position 24 (Arg24) interacts with dUMP. Position 54 (His54) interacts with (6R)-5,10-methylene-5,6,7,8-tetrahydrofolate. DUMP is bound at residue 129 to 130 (RR). The active-site Nucleophile is the Cys149. Residues 169 to 172 (RSAD), Asn180, and 210 to 212 (HIY) contribute to the dUMP site. Residue Asp172 coordinates (6R)-5,10-methylene-5,6,7,8-tetrahydrofolate. Ala265 lines the (6R)-5,10-methylene-5,6,7,8-tetrahydrofolate pocket.

It belongs to the thymidylate synthase family. Bacterial-type ThyA subfamily. In terms of assembly, homodimer.

It is found in the cytoplasm. The enzyme catalyses dUMP + (6R)-5,10-methylene-5,6,7,8-tetrahydrofolate = 7,8-dihydrofolate + dTMP. Its pathway is pyrimidine metabolism; dTTP biosynthesis. Functionally, catalyzes the reductive methylation of 2'-deoxyuridine-5'-monophosphate (dUMP) to 2'-deoxythymidine-5'-monophosphate (dTMP) while utilizing 5,10-methylenetetrahydrofolate (mTHF) as the methyl donor and reductant in the reaction, yielding dihydrofolate (DHF) as a by-product. This enzymatic reaction provides an intracellular de novo source of dTMP, an essential precursor for DNA biosynthesis. This Mycolicibacterium paratuberculosis (strain ATCC BAA-968 / K-10) (Mycobacterium paratuberculosis) protein is Thymidylate synthase.